Here is a 1240-residue protein sequence, read N- to C-terminus: Ubiquitin carboxyl-terminal hydrolase 36 (1240 aa).

2 disordered regions span residues 37–56 and 100–144; these read AKTS…STDN and SNGG…GTSA. Composition is skewed to low complexity over residues 47–56 and 101–132; these read SSTSGSSTDN and NGGA…DNNG. Residues 202–512 enclose the USP domain; it reads TGMLNVGNTC…NAYIMFYELD (311 aa). Cys-211 (nucleophile) is an active-site residue. The active-site Proton acceptor is the His-471. The segment at 637–705 is disordered; that stretch reads ANKSSCNTLN…KMFEESSESV (69 aa). A compositionally biased stretch (polar residues) spans 639-649; it reads KSSCNTLNNSK. Residues 650 to 662 are compositionally biased toward low complexity; sequence QHQPQQQQQQPQH. Over residues 668 to 680 the composition is skewed to acidic residues; the sequence is SDEEEDSDDDNDN. Residue Thr-715 is modified to Phosphothreonine. 4 disordered regions span residues 723–818, 831–998, 1076–1163, and 1198–1240; these read YESA…KQKT, YKNK…GESL, DMSS…EYES, and RFAG…QQQS. Phosphoserine is present on residues Ser-725 and Ser-727. The segment covering 733–744 has biased composition (low complexity); sequence QQQQQQQTLQQQ. Acidic residues predominate over residues 759–769; sequence SDTDDDDDEEQ. Over residues 794–815 the composition is skewed to low complexity; that stretch reads NSSSSKTKSASNASSANVNSSK. Acidic residues predominate over residues 843-859; that stretch reads DDDDDDDEDEDEDEDEA. Low complexity predominate over residues 869-879; sequence TKSSSSSSSTS. Over residues 880 to 890 the composition is skewed to polar residues; sequence LTNGWQQSQNG. Ser-895 carries the post-translational modification Phosphoserine. At Thr-898 the chain carries Phosphothreonine. At Ser-901 the chain carries Phosphoserine. Over residues 918-941 the composition is skewed to acidic residues; sequence DEDDDENVDGVADADDDDDNDEVA. Polar residues predominate over residues 976–988; that stretch reads LNGSSKSQQTTPR. Over residues 1076 to 1103 the composition is skewed to low complexity; it reads DMSSSSSSSSSTNSSSNSSSRSNGNSSN. A compositionally biased stretch (basic and acidic residues) spans 1111–1120; it reads AEAREQRKRD. The segment covering 1231–1240 has biased composition (low complexity); sequence QSSGQQQQQS.

It belongs to the peptidase C19 family. As to quaternary structure, interacts with atms/PAF1, but not with CycT.

It is found in the nucleus. It localises to the nucleolus. It carries out the reaction Thiol-dependent hydrolysis of ester, thioester, amide, peptide and isopeptide bonds formed by the C-terminal Gly of ubiquitin (a 76-residue protein attached to proteins as an intracellular targeting signal).. Required for maintaining multiple types of adult stem cells, including male and female germline, epithelial follicle cell and intestinal stem cells. May function as a transcriptional repressor by continually deubiquiting histone H2B at the promoters of genes critical for cellular differentiation, thereby preventing histone H3 'Lys-4' trimethylation (H3K4). Controls selective autophagy activation by ubiquitinated proteins. The sequence is that of Ubiquitin carboxyl-terminal hydrolase 36 (Usp36) from Drosophila grimshawi (Hawaiian fruit fly).